Here is a 244-residue protein sequence, read N- to C-terminus: Flavin-dependent thymidylate synthase (244 aa).

Residues 17 to 239 (ITVELVKHSA…PETHAAFEKQ (223 aa)) form the ThyX domain. Residues Ser68, 91 to 93 (RHR), and Glu99 each bind FAD. Residues 88–91 (EFMR), 99–103 (EESGR), and Arg171 contribute to the dUMP site. A ThyX motif motif is present at residues 91-101 (RHRIASYNEES). FAD-binding positions include 187–189 (NAR) and Asn193. Arg198 is a binding site for dUMP. Arg198 serves as the catalytic Involved in ionization of N3 of dUMP, leading to its activation.

The protein belongs to the thymidylate synthase ThyX family. In terms of assembly, homotetramer. Requires FAD as cofactor.

It carries out the reaction dUMP + (6R)-5,10-methylene-5,6,7,8-tetrahydrofolate + NADPH + H(+) = dTMP + (6S)-5,6,7,8-tetrahydrofolate + NADP(+). It functions in the pathway pyrimidine metabolism; dTTP biosynthesis. Catalyzes the reductive methylation of 2'-deoxyuridine-5'-monophosphate (dUMP) to 2'-deoxythymidine-5'-monophosphate (dTMP) while utilizing 5,10-methylenetetrahydrofolate (mTHF) as the methyl donor, and NADPH and FADH(2) as the reductant. This chain is Flavin-dependent thymidylate synthase, found in Tropheryma whipplei (strain Twist) (Whipple's bacillus).